We begin with the raw amino-acid sequence, 304 residues long: Recombination-associated protein RdgC (304 aa).

The protein belongs to the RdgC family.

Its subcellular location is the cytoplasm. It is found in the nucleoid. Its function is as follows. May be involved in recombination. The polypeptide is Recombination-associated protein RdgC (Dechloromonas aromatica (strain RCB)).